We begin with the raw amino-acid sequence, 279 residues long: Thymidylate synthase (279 aa).

133-134 (RR) is a binding site for dUMP. Catalysis depends on Cys154, which acts as the Nucleophile. DUMP is bound by residues 178–181 (RSND), Asn189, and 219–221 (HIY). (6R)-5,10-methylene-5,6,7,8-tetrahydrofolate is bound at residue Asp181. Residue Ala278 participates in (6R)-5,10-methylene-5,6,7,8-tetrahydrofolate binding.

It belongs to the thymidylate synthase family. Bacterial-type ThyA subfamily. As to quaternary structure, homodimer.

It localises to the cytoplasm. It catalyses the reaction dUMP + (6R)-5,10-methylene-5,6,7,8-tetrahydrofolate = 7,8-dihydrofolate + dTMP. The protein operates within pyrimidine metabolism; dTTP biosynthesis. In terms of biological role, catalyzes the reductive methylation of 2'-deoxyuridine-5'-monophosphate (dUMP) to 2'-deoxythymidine-5'-monophosphate (dTMP) while utilizing 5,10-methylenetetrahydrofolate (mTHF) as the methyl donor and reductant in the reaction, yielding dihydrofolate (DHF) as a by-product. This enzymatic reaction provides an intracellular de novo source of dTMP, an essential precursor for DNA biosynthesis. This chain is Thymidylate synthase, found in Streptococcus pyogenes serotype M3 (strain SSI-1).